We begin with the raw amino-acid sequence, 60 residues long: Mastoparan (60 aa).

Positions 1 to 27 are cleaved as a signal peptide; the sequence is MKDTILILFTAFIALLGFFGMSAEALA. AXPX repeat units follow at residues 27–30, 31–34, 35–38, and 41–44; these read ADPL, ADPS, AGPN, and ADPE. A propeptide spanning residues 28-45 is cleaved from the precursor; that stretch reads DPLADPSAGPNAEADPEA. Residue L59 is modified to Leucine amide.

The protein belongs to the MCD family. Mastoparan subfamily. In terms of tissue distribution, expressed by the venom gland.

It is found in the secreted. Its subcellular location is the target cell membrane. Its function is as follows. Mast cell degranulating peptide. Its mast cell degranulation activity may be related to the activation of G-protein coupled receptors in mast cells as well as interaction with other proteins located in cell endosomal membranes in the mast cells. Has a membranolytic activity on human glioblastoma multiforme cells (brain tumor cells) that leads to cell necrosis. This Vespa orientalis (Oriental hornet) protein is Mastoparan.